The primary structure comprises 301 residues: Multifunctional dioxygenase ausE (301 aa).

Substrate is bound by residues Arg-72 and Gln-127. Residues His-130 and Asp-132 each coordinate Fe cation. Thr-167 is a substrate binding site. His-214 provides a ligand contact to Fe cation. Arg-226 contributes to the substrate binding site.

This sequence belongs to the PhyH family. Homodimer. Fe cation serves as cofactor.

It carries out the reaction preaustinoid A1 + 2-oxoglutarate + O2 = preaustinoid A2 + succinate + CO2 + H2O. The enzyme catalyses preaustinoid A2 + 2-oxoglutarate + O2 = preaustinoid A3 + succinate + CO2 + H2O. The catalysed reaction is berkeleyone A + 2-oxoglutarate + O2 = preaustinoid A + succinate + CO2 + H2O. It functions in the pathway secondary metabolite biosynthesis; terpenoid biosynthesis. Functionally, multifunctional dioxygenase; part of the gene cluster A that mediates the biosynthesis of the fungal meroterpenoid acetoxydehydroaustin. The first step of the pathway is the synthesis of 3,5-dimethylorsellinic acid by the polyketide synthase ausA. 3,5-dimethylorsellinic acid is then prenylated by the polyprenyl transferase ausN. Further epoxidation by the FAD-dependent monooxygenase ausM and cyclization by the probable terpene cyclase ausL lead to the formation of protoaustinoid A. Protoaustinoid A is then oxidized to spiro-lactone preaustinoid A3 by the combined action of the FAD-binding monooxygenases ausB and ausC, and the dioxygenase ausE. Acid-catalyzed keto-rearrangement and ring contraction of the tetraketide portion of preaustinoid A3 by ausJ lead to the formation of preaustinoid A4. The aldo-keto reductase ausK, with the help of ausH, is involved in the next step by transforming preaustinoid A4 into isoaustinone which is in turn hydroxylated by the P450 monooxygenase ausI to form austinolide. The cytochrome P450 monooxygenase ausG then modifies austinolide to austinol. Austinol is further acetylated to austin by the O-acetyltransferase ausP, which spontaneously changes to dehydroaustin. The cytochrome P450 monooxygenase then converts dehydroaustin is into 7-dehydrodehydroaustin. The hydroxylation catalyzed by ausR permits the second O-acetyltransferase ausQ to add an additional acetyl group to the molecule, leading to the formation of acetoxydehydroaustin. Due to genetic rearrangements of the clusters and the subsequent loss of some enzymes, the end product of the Penicillium brasilianum austinoid biosynthesis clusters is acetoxydehydroaustin. The chain is Multifunctional dioxygenase ausE from Penicillium brasilianum.